The following is a 391-amino-acid chain: Anhydro-N-acetylmuramic acid kinase (391 aa).

9–16 (GTSYDAVE) is an ATP binding site.

It belongs to the anhydro-N-acetylmuramic acid kinase family.

The enzyme catalyses 1,6-anhydro-N-acetyl-beta-muramate + ATP + H2O = N-acetyl-D-muramate 6-phosphate + ADP + H(+). It participates in amino-sugar metabolism; 1,6-anhydro-N-acetylmuramate degradation. The protein operates within cell wall biogenesis; peptidoglycan recycling. In terms of biological role, catalyzes the specific phosphorylation of 1,6-anhydro-N-acetylmuramic acid (anhMurNAc) with the simultaneous cleavage of the 1,6-anhydro ring, generating MurNAc-6-P. Is required for the utilization of anhMurNAc either imported from the medium or derived from its own cell wall murein, and thus plays a role in cell wall recycling. This chain is Anhydro-N-acetylmuramic acid kinase, found in Streptomyces coelicolor (strain ATCC BAA-471 / A3(2) / M145).